Reading from the N-terminus, the 413-residue chain is Serine hydroxymethyltransferase (413 aa).

Residues Leu-119 and 123 to 125 (GHL) each bind (6S)-5,6,7,8-tetrahydrofolate. At Lys-228 the chain carries N6-(pyridoxal phosphate)lysine. Glu-243 lines the (6S)-5,6,7,8-tetrahydrofolate pocket.

This sequence belongs to the SHMT family. As to quaternary structure, homodimer. Pyridoxal 5'-phosphate serves as cofactor.

Its subcellular location is the cytoplasm. The catalysed reaction is (6R)-5,10-methylene-5,6,7,8-tetrahydrofolate + glycine + H2O = (6S)-5,6,7,8-tetrahydrofolate + L-serine. Its pathway is one-carbon metabolism; tetrahydrofolate interconversion. The protein operates within amino-acid biosynthesis; glycine biosynthesis; glycine from L-serine: step 1/1. Catalyzes the reversible interconversion of serine and glycine with tetrahydrofolate (THF) serving as the one-carbon carrier. This reaction serves as the major source of one-carbon groups required for the biosynthesis of purines, thymidylate, methionine, and other important biomolecules. Also exhibits THF-independent aldolase activity toward beta-hydroxyamino acids, producing glycine and aldehydes, via a retro-aldol mechanism. The sequence is that of Serine hydroxymethyltransferase from Desulforamulus reducens (strain ATCC BAA-1160 / DSM 100696 / MI-1) (Desulfotomaculum reducens).